The primary structure comprises 374 residues: Isocitrate dehydrogenase [NAD] catalytic subunit 6, mitochondrial (374 aa).

The N-terminal 44 residues, 1–44 (MTMTAFLARRLIGNGSSQILGTSSSSSGPFISVSRAFFSSSTPI), are a transit peptide targeting the mitochondrion. Residues arginine 127, arginine 137, arginine 158, and aspartate 245 each coordinate substrate. 3 residues coordinate Mg(2+): aspartate 245, aspartate 269, and aspartate 273.

It belongs to the isocitrate and isopropylmalate dehydrogenases family. In terms of assembly, heterooligomer of catalytic and regulatory subunits. The cofactor is Mg(2+). Mn(2+) serves as cofactor. In terms of tissue distribution, ubiquitous. Predominantly expressed in leaves.

Its subcellular location is the mitochondrion. The catalysed reaction is D-threo-isocitrate + NAD(+) = 2-oxoglutarate + CO2 + NADH. Catalytic subunit of the NAD(+)-dependent isocitrate dehydrogenase involved in the oxidative decarboxylation of isocitrate to 2-oxoglutarate. Performs an essential role in the oxidative function of the citric acid cycle. This Arabidopsis thaliana (Mouse-ear cress) protein is Isocitrate dehydrogenase [NAD] catalytic subunit 6, mitochondrial (IDH6).